Reading from the N-terminus, the 228-residue chain is Core-capsid bridging protein (228 aa).

The tract at residues Ala146 to Ser177 is disordered. Residues Pro155–Arg167 are compositionally biased toward basic residues. Positions Pro168–Ser177 are enriched in low complexity.

It belongs to the adenoviridae core-capsid bridging protein family. In terms of assembly, monomer. Homodimer. Exists in equilibrium between monomers and dimers in solution. Interacts with the histone-like nucleoprotein; this interactions bridge the virus core to the capsid. Interacts with core protein X; this interactions bridge the virus core to the capsid. Interacts with the endosome lysis protein VI; this interactions bridge the virus core to the capsid. Interacts with the peripentonal hexons. Interacts with host NPM1; this interaction might play a role in virus assembly.

The protein localises to the virion. It is found in the host nucleus. It localises to the host nucleolus. Associates loosely with the viral DNA to form an outer shell around the nucleoprotein-DNA complex and links it with the capsid by binding the endosome lysis protein. Dissociates from the viral genome during entry. Might be involved in nuclear capsid assembly of the viral particles through its association with NPM1/nucleophosmin. This is Core-capsid bridging protein from Murine adenovirus A serotype 1 (MAdV-1).